A 246-amino-acid polypeptide reads, in one-letter code: Vacuolar iron transporter 2 (246 aa).

The Cytoplasmic segment spans residues 1–32; the sequence is MVKEFVQDEEKQRLLLDEHTEKHFTAGEVVRD. A helical membrane pass occupies residues 33–53; the sequence is IIIGVSDGLTVPFALAAGLSG. Over 54 to 58 the chain is Vacuolar; it reads ANAPS. A helical membrane pass occupies residues 59–79; that stretch reads ALVLTAGLAEVAAGAISMGLG. The Cytoplasmic portion of the chain corresponds to 80 to 164; it reads GYLAAKSDAD…PEPRRALMSA (85 aa). Positions 86-161 are cytoplasmic metal binding domain (MBD); sequence SDADHYHREL…LEKPEPRRAL (76 aa). The Fe cation site is built by Glu98, Glu101, Glu109, Glu112, Met145, and Glu149. The helical transmembrane segment at 165–185 threads the bilayer; it reads GTIALAYVVGGLVPLLPYMFV. The Vacuolar portion of the chain corresponds to 186–190; the sequence is PTADR. A helical membrane pass occupies residues 191–211; sequence AMATSVVVTLAALLFFGYVKG. The Cytoplasmic segment spans residues 212 to 218; that stretch reads RFTGNRP. A helical membrane pass occupies residues 219–239; sequence FISAFQTAVIGALASAAAFGM. Residues 240–246 are Vacuolar-facing; sequence AKAVQSI.

This sequence belongs to the CCC1 family. As to quaternary structure, homodimer. The dimeric interaction is mediated by both the transmembrane domains (TMDs) and the cytoplasmic metal binding domain (MBD). In terms of tissue distribution, expressed in leaf sheaths and at lower level in leaf blades.

Its subcellular location is the vacuole membrane. The enzyme catalyses Fe(2+)(in) = Fe(2+)(out). Its function is as follows. Vacuolar iron transporter involved in the transfer of iron ions from the cytosol to the vacuole for intracellular iron storage. Vacuolar iron storage is required for seed embryo and seedling development. May be involved in the regulation of iron translocation between flag leaves and seeds. Can transport zinc ions from the cytosol to the vacuole. This is Vacuolar iron transporter 2 from Oryza sativa subsp. japonica (Rice).